The primary structure comprises 113 residues: UPF0342 protein SEQ_0993 (113 aa).

It belongs to the UPF0342 family.

This is UPF0342 protein SEQ_0993 from Streptococcus equi subsp. equi (strain 4047).